A 200-amino-acid polypeptide reads, in one-letter code: Segregation and condensation protein B (200 aa).

It belongs to the ScpB family. Homodimer. Homodimerization may be required to stabilize the binding of ScpA to the Smc head domains. Component of a cohesin-like complex composed of ScpA, ScpB and the Smc homodimer, in which ScpA and ScpB bind to the head domain of Smc. The presence of the three proteins is required for the association of the complex with DNA.

It localises to the cytoplasm. Functionally, participates in chromosomal partition during cell division. May act via the formation of a condensin-like complex containing Smc and ScpA that pull DNA away from mid-cell into both cell halves. This is Segregation and condensation protein B from Lactobacillus delbrueckii subsp. bulgaricus (strain ATCC 11842 / DSM 20081 / BCRC 10696 / JCM 1002 / NBRC 13953 / NCIMB 11778 / NCTC 12712 / WDCM 00102 / Lb 14).